The chain runs to 63 residues: Alpha-conotoxin-like PuSG1.1 (63 aa).

The first 21 residues, 1–21, serve as a signal peptide directing secretion; it reads MRCLAFLVVTLLLFTATATTG. Residues 22–43 constitute a propeptide that is removed on maturation; that stretch reads ASNGMNAAASGEAPDSISLAVR. Disulfide bonds link cysteine 46-cysteine 52 and cysteine 47-cysteine 60. The tract at residues 48 to 50 is lacks the Ser-Xaa-Pro motif that is crucial for potent interaction with nAChR; the sequence is PDP.

It belongs to the conotoxin A superfamily. Expressed by the salivary gland.

Its subcellular location is the secreted. Functionally, alpha-conopeptides-like may act on postsynaptic membranes, they bind to the nicotinic acetylcholine receptors (nAChR) and thus inhibit them. Has possibly a distinct nAChR binding mode from other alpha-conotoxins, due to a different three residue motif (lacks the Ser-Xaa-Pro motif). This Conus pulicarius (Flea-bitten cone) protein is Alpha-conotoxin-like PuSG1.1.